Consider the following 635-residue polypeptide: Bifunctional lysine-specific demethylase and histidyl-hydroxylase NO66 (635 aa).

Disordered regions lie at residues 1–115 (MSAV…LQNS) and 141–190 (FNGE…KANG). The segment covering 84–99 (ASASDINTSASKNVNA) has biased composition (low complexity). Over residues 141–156 (FNGESLKNNSNHSTPV) the composition is skewed to polar residues. The 146-residue stretch at 295–440 (CSIRMLNPQT…DLLELFFPHA (146 aa)) folds into the JmjC domain. Fe cation-binding residues include H341, D343, and H406.

This sequence belongs to the ROX family. NO66 subfamily. Fe(2+) is required as a cofactor.

The protein resides in the nucleus. The catalysed reaction is N(6),N(6)-dimethyl-L-lysyl(36)-[histone H3] + 2 2-oxoglutarate + 2 O2 = L-lysyl(36)-[histone H3] + 2 formaldehyde + 2 succinate + 2 CO2. Functionally, oxygenase that can act as both a histone lysine demethylase and a ribosomal histidine hydroxylase. Specifically demethylates 'Lys-4' (H3K4me) and 'Lys-36' (H3K36me) of histone H3, thereby playing a central role in histone code. This Aedes aegypti (Yellowfever mosquito) protein is Bifunctional lysine-specific demethylase and histidyl-hydroxylase NO66.